Consider the following 417-residue polypeptide: NADH-quinone oxidoreductase subunit D (417 aa).

The protein belongs to the complex I 49 kDa subunit family. In terms of assembly, NDH-1 is composed of 14 different subunits. Subunits NuoB, C, D, E, F, and G constitute the peripheral sector of the complex.

The protein resides in the cell inner membrane. It carries out the reaction a quinone + NADH + 5 H(+)(in) = a quinol + NAD(+) + 4 H(+)(out). Its function is as follows. NDH-1 shuttles electrons from NADH, via FMN and iron-sulfur (Fe-S) centers, to quinones in the respiratory chain. The immediate electron acceptor for the enzyme in this species is believed to be ubiquinone. Couples the redox reaction to proton translocation (for every two electrons transferred, four hydrogen ions are translocated across the cytoplasmic membrane), and thus conserves the redox energy in a proton gradient. The polypeptide is NADH-quinone oxidoreductase subunit D (Nitrosococcus oceani (strain ATCC 19707 / BCRC 17464 / JCM 30415 / NCIMB 11848 / C-107)).